The chain runs to 473 residues: PPE family protein PPE37 (473 aa).

An Iron-binding motif motif is present at residues 203–206 (DFLE). A run of 2 helical transmembrane segments spans residues 227 to 247 (VLDWFISFVSGPVFTFLAYLV) and 250 to 270 (PLIYFGPFAPLTSPVLLPAGL).

Belongs to the mycobacterial PPE family.

Its subcellular location is the cell membrane. In terms of biological role, essential for efficient heme-iron acquisition (HIA). Binds iron. Strains with a functional PPE37 can utilize low concentrations of hemin very efficiently in broth and on agar plates. During infection, might interfere with the pro-inflammatory cytokine response in infected macrophages. Its function is as follows. In vitro, incubation of the protein in the presence of M.tuberculosis proteases leads to the cleavage of PPE37 into two segments, the N- and C-terminal segments. Transfection of human monocytic THP-1 cell lines with the N-terminal segment leads to the proliferation and differentiation of THP-1 cells into adherent stellate cells with dendritic cell-like morphology. Transfection of THP-1 cells with the C-terminal segment leads to the apoptosis of the cells. Recombinant protein antigens display strong B-cell response in tuberculosis patients and immunized mice. This Mycobacterium tuberculosis (strain ATCC 25618 / H37Rv) protein is PPE family protein PPE37.